A 391-amino-acid polypeptide reads, in one-letter code: 1-deoxy-D-xylulose 5-phosphate reductoisomerase (391 aa).

Position 109 (Asn-109) interacts with NADPH. Residue Lys-110 participates in 1-deoxy-D-xylulose 5-phosphate binding. Residue Glu-111 coordinates NADPH. Position 135 (Asp-135) interacts with Mn(2+). Positions 136, 137, 171, and 194 each coordinate 1-deoxy-D-xylulose 5-phosphate. A Mn(2+)-binding site is contributed by Glu-137. Residue Gly-200 coordinates NADPH. Residues Ser-207, Asn-212, Arg-213, and Glu-216 each contribute to the 1-deoxy-D-xylulose 5-phosphate site. Glu-216 provides a ligand contact to Mn(2+).

Belongs to the DXR family. As to quaternary structure, homodimer. Requires Mg(2+) as cofactor. Mn(2+) is required as a cofactor.

The catalysed reaction is 2-C-methyl-D-erythritol 4-phosphate + NADP(+) = 1-deoxy-D-xylulose 5-phosphate + NADPH + H(+). Its pathway is isoprenoid biosynthesis; isopentenyl diphosphate biosynthesis via DXP pathway; isopentenyl diphosphate from 1-deoxy-D-xylulose 5-phosphate: step 1/6. Functionally, catalyzes the NADPH-dependent rearrangement and reduction of 1-deoxy-D-xylulose-5-phosphate (DXP) to 2-C-methyl-D-erythritol 4-phosphate (MEP). This chain is 1-deoxy-D-xylulose 5-phosphate reductoisomerase, found in Blochmanniella floridana.